We begin with the raw amino-acid sequence, 280 residues long: Protein YibA (280 aa).

In Escherichia coli O157:H7, this protein is Protein YibA (yibA).